The primary structure comprises 572 residues: Urease subunit alpha (572 aa).

One can recognise a Urease domain in the interval 136-572 (GGIDTHIHWI…VPLAQRYFLF (437 aa)). The Ni(2+) site is built by histidine 141, histidine 143, and lysine 224. N6-carboxylysine is present on lysine 224. Histidine 226 contacts substrate. Histidine 253 and histidine 279 together coordinate Ni(2+). The active-site Proton donor is the histidine 327. Ni(2+) is bound at residue aspartate 367.

This sequence belongs to the metallo-dependent hydrolases superfamily. Urease alpha subunit family. In terms of assembly, heterotrimer of UreA (gamma), UreB (beta) and UreC (alpha) subunits. Three heterotrimers associate to form the active enzyme. Ni cation serves as cofactor. Carboxylation allows a single lysine to coordinate two nickel ions.

Its subcellular location is the cytoplasm. It catalyses the reaction urea + 2 H2O + H(+) = hydrogencarbonate + 2 NH4(+). Its pathway is nitrogen metabolism; urea degradation; CO(2) and NH(3) from urea (urease route): step 1/1. This Actinobacillus pleuropneumoniae serotype 3 (strain JL03) protein is Urease subunit alpha.